The primary structure comprises 385 residues: Actin-2 (385 aa).

This sequence belongs to the actin family. ARP1 subfamily.

It is found in the cytoplasm. The protein resides in the cytoskeleton. The chain is Actin-2 from Pneumocystis carinii.